The primary structure comprises 317 residues: MYTKIIGTGSYLPEQVRTNADLEKMVETSDEWIVTRTGIRERHIAAPNETVATMGFTAANRAIEMAGIDKDQIGLIVVATTSATHAFPSAACQIQSMLGIKGCPAFDVAAACAGFTYALSIADQYVKSGAVKHALVVGSDVLARTCDPGDRGTIIIFGDGAGAAVLSASEEPGIISTHLHADGRYGELLTLPNADRVNPDNPIYLTMAGNEVFKVAVTELAHIVDETLAANNLDRSELDWLVPHQANLRIISATAKKLGMSMDNVVVTLDRHGNTSAASVPCALDEAVRDGRIKAGQLVLLEAFGGGFTWGSALIRF.

Active-site residues include cysteine 112 and histidine 244. An ACP-binding region spans residues 245–249 (QANLR). The active site involves asparagine 274.

The protein belongs to the thiolase-like superfamily. FabH family. Homodimer.

The protein resides in the cytoplasm. It carries out the reaction malonyl-[ACP] + acetyl-CoA + H(+) = 3-oxobutanoyl-[ACP] + CO2 + CoA. It participates in lipid metabolism; fatty acid biosynthesis. In terms of biological role, catalyzes the condensation reaction of fatty acid synthesis by the addition to an acyl acceptor of two carbons from malonyl-ACP. Catalyzes the first condensation reaction which initiates fatty acid synthesis and may therefore play a role in governing the total rate of fatty acid production. Possesses both acetoacetyl-ACP synthase and acetyl transacylase activities. Its substrate specificity determines the biosynthesis of branched-chain and/or straight-chain of fatty acids. This is Beta-ketoacyl-[acyl-carrier-protein] synthase III from Salmonella paratyphi B (strain ATCC BAA-1250 / SPB7).